The chain runs to 120 residues: Large ribosomal subunit protein uL18 (120 aa).

The protein belongs to the universal ribosomal protein uL18 family. Part of the 50S ribosomal subunit; part of the 5S rRNA/L5/L18/L25 subcomplex. Contacts the 5S and 23S rRNAs.

Its function is as follows. This is one of the proteins that bind and probably mediate the attachment of the 5S RNA into the large ribosomal subunit, where it forms part of the central protuberance. This Rhizobium rhizogenes (strain K84 / ATCC BAA-868) (Agrobacterium radiobacter) protein is Large ribosomal subunit protein uL18.